The primary structure comprises 315 residues: Protein translocase subunit SecF (315 aa).

The next 6 helical transmembrane spans lie at 12-32 (AWIV…ISWA), 136-156 (ALFR…IIYL), 166-186 (VFAI…FAIF), 188-208 (LVGG…IIGF), 247-267 (SINT…FGGD), and 271-291 (FFAL…IFMA).

It belongs to the SecD/SecF family. SecF subfamily. Forms a complex with SecD. Part of the essential Sec protein translocation apparatus which comprises SecA, SecYEG and auxiliary proteins SecDF. Other proteins may also be involved.

The protein resides in the cell inner membrane. Its function is as follows. Part of the Sec protein translocase complex. Interacts with the SecYEG preprotein conducting channel. SecDF uses the proton motive force (PMF) to complete protein translocation after the ATP-dependent function of SecA. Probably participates in protein translocation into and across both the cytoplasmic and thylakoid membranes in cyanobacterial cells. The chain is Protein translocase subunit SecF from Synechocystis sp. (strain ATCC 27184 / PCC 6803 / Kazusa).